The chain runs to 214 residues: GTP-binding protein ypt3 (214 aa).

17 to 24 (GDSGVGKS) lines the GTP pocket. Positions 39–47 (SKSTIGVEF) match the Effector region motif. Position 42 is a phosphothreonine (Thr-42). GTP is bound by residues 65-69 (DTAGQ) and 123-126 (NKTD). S-geranylgeranyl cysteine attachment occurs at residues Cys-213 and Cys-214.

It belongs to the small GTPase superfamily. Rab family.

Its subcellular location is the cell membrane. The protein resides in the endosome membrane. It is found in the golgi apparatus membrane. The protein localises to the cytoplasm. It localises to the nucleus. In terms of biological role, has a role in retrograde traffricking of proteins from the endosome to the Golgi. Involved in the secretory pathway where it has a role in acid phosphatase secretion. This chain is GTP-binding protein ypt3 (ypt3), found in Schizosaccharomyces pombe (strain 972 / ATCC 24843) (Fission yeast).